A 309-amino-acid chain; its full sequence is GTP cyclohydrolase MptA (309 aa).

This sequence belongs to the GTP cyclohydrolase IV family. As to quaternary structure, homodimer. It depends on Fe(2+) as a cofactor.

It catalyses the reaction GTP + H2O = 7,8-dihydroneopterin 2',3'-cyclic phosphate + formate + diphosphate + H(+). It participates in cofactor biosynthesis; 5,6,7,8-tetrahydromethanopterin biosynthesis. In terms of biological role, converts GTP to 7,8-dihydro-D-neopterin 2',3'-cyclic phosphate, the first intermediate in the biosynthesis of coenzyme methanopterin. In Haloarcula marismortui (strain ATCC 43049 / DSM 3752 / JCM 8966 / VKM B-1809) (Halobacterium marismortui), this protein is GTP cyclohydrolase MptA.